A 384-amino-acid polypeptide reads, in one-letter code: Protein V (384 aa).

Disordered regions lie at residues 1–23 (MDQD…GGRE) and 38–318 (SEPT…KKGH). Basic and acidic residues predominate over residues 7–20 (ILKEDSEVEREAPG). Residues 50-59 (LHNTINTPQG) are compositionally biased toward polar residues. Serine 68 bears the Phosphoserine; by host mark. Basic and acidic residues predominate over residues 83–101 (RSGEESRVSGRTSKPEAEA). Position 125 is a phosphoserine; by host (serine 125). The segment covering 150 to 168 (GIEDENREMAAHPDKRGED) has biased composition (basic and acidic residues). Polar residues predominate over residues 191 to 206 (ASNNGRSMEPGSSHSA). 4 positions are modified to phosphoserine; by host: serine 192, serine 249, serine 257, and serine 260. Residues histidine 318, cysteine 337, cysteine 341, cysteine 353, cysteine 355, cysteine 358, cysteine 362, and cysteine 365 each coordinate Zn(2+).

It belongs to the paramyxoviruses V protein family. Interacts with host IFIH1/MDA5 and DHX58/LGP2. Interacts with host IRF3. Interacts with host RIGI regulatory protein (via CARDs domain) and host TRIM25 (via SPRY domain); these interactions prevent TRIM25-mediated ubiquitination of RIG-I and disrupts downstream RIG-I signaling.

It localises to the host cytoplasm. In terms of biological role, plays an essential role in the inhibition of host immune response. Prevents the establishment of cellular antiviral state by blocking interferon-alpha/beta (IFN-alpha/beta) production and signaling pathway. Interacts with host IFIH1/MDA5 and DHX58/LGP2 to inhibit the transduction pathway involved in the activation of IFN-beta promoter, thus protecting the virus against cell antiviral state. Also interacts with and inhibits host IRF3. Blocks the type I interferon signaling pathway by disrupting the RIG-I signaling pathway. In Sendai virus (strain Harris) (SeV), this protein is Protein V (P/V/C).